The sequence spans 263 residues: MKERFIKKTHYLDYQFDEHTDIKLGFTTRENGLSPYPNHSFNMARYISDSAHHITHHQDILANLIGYPRDEWVFPIQTHDNRIVEVTSEHKGTNIDKLTDDLHGIDGMYTFDSHILLTMCYADCVPVYFYSESHGYIGLAHAGWRGTYGQIVKEMLKKVDFDYEDLKIVIGPATSNSYEINDDIKNKFEELTIDSTLYIESRGKNKHGIDLKKANALLLEEAGVPSKNIYITEYSTSENLDLFFSYRVEKGQTGRMLAFIGRK.

Zn(2+) is bound by residues histidine 79, cysteine 124, and histidine 141.

Belongs to the purine nucleoside phosphorylase YfiH/LACC1 family. As to quaternary structure, homodimer. Requires Cu(2+) as cofactor. The cofactor is Zn(2+).

It catalyses the reaction adenosine + phosphate = alpha-D-ribose 1-phosphate + adenine. The enzyme catalyses S-methyl-5'-thioadenosine + phosphate = 5-(methylsulfanyl)-alpha-D-ribose 1-phosphate + adenine. The catalysed reaction is inosine + phosphate = alpha-D-ribose 1-phosphate + hypoxanthine. It carries out the reaction adenosine + H2O + H(+) = inosine + NH4(+). Functionally, purine nucleoside enzyme that catalyzes the phosphorolysis of adenosine and inosine nucleosides, yielding D-ribose 1-phosphate and the respective free bases, adenine and hypoxanthine. Also catalyzes the phosphorolysis of S-methyl-5'-thioadenosine into adenine and S-methyl-5-thio-alpha-D-ribose 1-phosphate. Also has adenosine deaminase activity. This chain is Purine nucleoside phosphorylase SERP0752, found in Staphylococcus epidermidis (strain ATCC 35984 / DSM 28319 / BCRC 17069 / CCUG 31568 / BM 3577 / RP62A).